Consider the following 331-residue polypeptide: Anthranilate phosphoribosyltransferase (331 aa).

5-phospho-alpha-D-ribose 1-diphosphate contacts are provided by residues glycine 78, 81–82, threonine 86, 88–91, 106–114, and serine 118; these read GD, NVST, and KHGNYSVSS. An anthranilate-binding site is contributed by glycine 78. Serine 90 contacts Mg(2+). Residue asparagine 109 participates in anthranilate binding. Residue arginine 164 participates in anthranilate binding. Mg(2+) is bound by residues aspartate 222 and glutamate 223.

It belongs to the anthranilate phosphoribosyltransferase family. In terms of assembly, homodimer. Mg(2+) is required as a cofactor.

The enzyme catalyses N-(5-phospho-beta-D-ribosyl)anthranilate + diphosphate = 5-phospho-alpha-D-ribose 1-diphosphate + anthranilate. The protein operates within amino-acid biosynthesis; L-tryptophan biosynthesis; L-tryptophan from chorismate: step 2/5. In terms of biological role, catalyzes the transfer of the phosphoribosyl group of 5-phosphorylribose-1-pyrophosphate (PRPP) to anthranilate to yield N-(5'-phosphoribosyl)-anthranilate (PRA). The sequence is that of Anthranilate phosphoribosyltransferase from Haloferax volcanii (strain ATCC 29605 / DSM 3757 / JCM 8879 / NBRC 14742 / NCIMB 2012 / VKM B-1768 / DS2) (Halobacterium volcanii).